The sequence spans 151 residues: Cathelicidin-3 (151 aa).

The signal sequence occupies residues M1–A17. The propeptide occupies L18–V122. 2 disulfides stabilise this stretch: C75–C86 and C97–C114. Residues W128–I148 traverse the membrane as a helical segment.

It belongs to the cathelicidin family. As to expression, detected in bone marrow, liver and lung.

The protein localises to the secreted. The protein resides in the membrane. May bind bacterial lipopolysaccharide (LPS). May have antimicrobial activity and play a role in the innate immune response. This chain is Cathelicidin-3 (CATHL3), found in Gallus gallus (Chicken).